We begin with the raw amino-acid sequence, 205 residues long: Small ribosomal subunit protein uS4 (205 aa).

The segment at 18-49 (NIWGRPKSPVNKREYGPGQHGQRRKGKLSDFG) is disordered. Positions 94–157 (RRLDAIVYRA…KQLALVLEAN (64 aa)) constitute an S4 RNA-binding domain.

The protein belongs to the universal ribosomal protein uS4 family. Part of the 30S ribosomal subunit. Contacts protein S5. The interaction surface between S4 and S5 is involved in control of translational fidelity.

One of the primary rRNA binding proteins, it binds directly to 16S rRNA where it nucleates assembly of the body of the 30S subunit. Its function is as follows. With S5 and S12 plays an important role in translational accuracy. This is Small ribosomal subunit protein uS4 from Afipia carboxidovorans (strain ATCC 49405 / DSM 1227 / KCTC 32145 / OM5) (Oligotropha carboxidovorans).